We begin with the raw amino-acid sequence, 361 residues long: 3-dehydroquinate synthase (361 aa).

NAD(+)-binding positions include 72-77 (SGEKEK), 130-131 (TT), lysine 142, and lysine 151. 3 residues coordinate Zn(2+): glutamate 184, histidine 247, and histidine 264.

It belongs to the sugar phosphate cyclases superfamily. Dehydroquinate synthase family. Co(2+) is required as a cofactor. The cofactor is Zn(2+). NAD(+) serves as cofactor.

The protein localises to the cytoplasm. It catalyses the reaction 7-phospho-2-dehydro-3-deoxy-D-arabino-heptonate = 3-dehydroquinate + phosphate. It participates in metabolic intermediate biosynthesis; chorismate biosynthesis; chorismate from D-erythrose 4-phosphate and phosphoenolpyruvate: step 2/7. Functionally, catalyzes the conversion of 3-deoxy-D-arabino-heptulosonate 7-phosphate (DAHP) to dehydroquinate (DHQ). The chain is 3-dehydroquinate synthase from Bacillus cereus (strain B4264).